The following is a 486-amino-acid chain: Histidine--tRNA ligase, chloroplastic/mitochondrial (486 aa).

This sequence belongs to the class-II aminoacyl-tRNA synthetase family.

Its subcellular location is the plastid. The protein resides in the chloroplast. It is found in the mitochondrion. It carries out the reaction tRNA(His) + L-histidine + ATP = L-histidyl-tRNA(His) + AMP + diphosphate + H(+). The chain is Histidine--tRNA ligase, chloroplastic/mitochondrial from Arabidopsis thaliana (Mouse-ear cress).